The sequence spans 48 residues: Phospholipase A2 TI-Nh (48 aa).

His25 is an active-site residue. Asp26 lines the Ca(2+) pocket.

Belongs to the phospholipase A2 family. Group I subfamily. D49 sub-subfamily. As to quaternary structure, monomer. Requires Ca(2+) as cofactor. In terms of tissue distribution, expressed by the venom gland.

It is found in the secreted. The enzyme catalyses a 1,2-diacyl-sn-glycero-3-phosphocholine + H2O = a 1-acyl-sn-glycero-3-phosphocholine + a fatty acid + H(+). In terms of biological role, phospholipase A2 with weak enzymatic activity, which partially inhibits thrombin enzymatic activity (Ki=73 nM), completely inhibits thrombin-induced platelet aggregation and retards fibrin clot formation (IC(50)=0.2 nM). May exert this anticoagulant effect through a non-enzymatic mechanism. In Naja haje haje (Egyptian cobra), this protein is Phospholipase A2 TI-Nh.